A 618-amino-acid chain; its full sequence is Dihydroxy-acid dehydratase (618 aa).

A Mg(2+)-binding site is contributed by aspartate 81. Position 122 (cysteine 122) interacts with [2Fe-2S] cluster. Mg(2+) is bound by residues aspartate 123 and lysine 124. Lysine 124 is subject to N6-carboxylysine. Position 195 (cysteine 195) interacts with [2Fe-2S] cluster. Residue glutamate 493 participates in Mg(2+) binding. Serine 519 (proton acceptor) is an active-site residue.

The protein belongs to the IlvD/Edd family. As to quaternary structure, homodimer. [2Fe-2S] cluster serves as cofactor. It depends on Mg(2+) as a cofactor.

The enzyme catalyses (2R)-2,3-dihydroxy-3-methylbutanoate = 3-methyl-2-oxobutanoate + H2O. It catalyses the reaction (2R,3R)-2,3-dihydroxy-3-methylpentanoate = (S)-3-methyl-2-oxopentanoate + H2O. It participates in amino-acid biosynthesis; L-isoleucine biosynthesis; L-isoleucine from 2-oxobutanoate: step 3/4. It functions in the pathway amino-acid biosynthesis; L-valine biosynthesis; L-valine from pyruvate: step 3/4. Its function is as follows. Functions in the biosynthesis of branched-chain amino acids. Catalyzes the dehydration of (2R,3R)-2,3-dihydroxy-3-methylpentanoate (2,3-dihydroxy-3-methylvalerate) into 2-oxo-3-methylpentanoate (2-oxo-3-methylvalerate) and of (2R)-2,3-dihydroxy-3-methylbutanoate (2,3-dihydroxyisovalerate) into 2-oxo-3-methylbutanoate (2-oxoisovalerate), the penultimate precursor to L-isoleucine and L-valine, respectively. In Shewanella amazonensis (strain ATCC BAA-1098 / SB2B), this protein is Dihydroxy-acid dehydratase.